Consider the following 170-residue polypeptide: Adenine phosphoribosyltransferase (170 aa).

The protein belongs to the purine/pyrimidine phosphoribosyltransferase family. As to quaternary structure, homodimer.

The protein localises to the cytoplasm. The catalysed reaction is AMP + diphosphate = 5-phospho-alpha-D-ribose 1-diphosphate + adenine. It functions in the pathway purine metabolism; AMP biosynthesis via salvage pathway; AMP from adenine: step 1/1. Catalyzes a salvage reaction resulting in the formation of AMP, that is energically less costly than de novo synthesis. The protein is Adenine phosphoribosyltransferase of Pseudothermotoga lettingae (strain ATCC BAA-301 / DSM 14385 / NBRC 107922 / TMO) (Thermotoga lettingae).